The following is a 65-amino-acid chain: Beta-defensin 106A (65 aa).

An N-terminal signal peptide occupies residues 1-20; sequence MRTFLFLFAVLFFLTPAKNE. Disulfide bonds link cysteine 26–cysteine 53, cysteine 33–cysteine 47, and cysteine 37–cysteine 54.

Belongs to the beta-defensin family. In terms of assembly, monomer. Interacts with CCR2 (via extracellular N-terminal region); this interaction may preferentially require specific tyrosine sulfation on CCR2.

It is found in the secreted. Its subcellular location is the membrane. Functionally, has antibacterial activity. Acts as a ligand for C-C chemokine receptor CCR2. This is Beta-defensin 106A (DEFB106A) from Pongo pygmaeus (Bornean orangutan).